A 177-amino-acid polypeptide reads, in one-letter code: Large ribosomal subunit protein uL6 (177 aa).

This sequence belongs to the universal ribosomal protein uL6 family. As to quaternary structure, part of the 50S ribosomal subunit.

Functionally, this protein binds to the 23S rRNA, and is important in its secondary structure. It is located near the subunit interface in the base of the L7/L12 stalk, and near the tRNA binding site of the peptidyltransferase center. The protein is Large ribosomal subunit protein uL6 of Actinobacillus pleuropneumoniae serotype 5b (strain L20).